Consider the following 994-residue polypeptide: Myosin IA heavy chain (994 aa).

One can recognise a Myosin motor domain in the interval 12-720 (VGVEDLIMLT…PLFLLEDKRN (709 aa)). 105 to 112 (GESGAGKT) is a binding site for ATP. The tract at residues 574-654 (TFIPTDKKRP…RAGYCYRQTF (81 aa)) is actin-binding. 2 IQ domains span residues 723–744 (LNDLATKIGSVWKMYKQRKWYL) and 745–774 (RTLAAIKIQRTYRGWLLVRECVKLKNQSIS). Positions 782-970 (RNRQSIKLSK…ANSPSFTAKA (189 aa)) constitute a TH1 domain.

It belongs to the TRAFAC class myosin-kinesin ATPase superfamily. Myosin family. As to quaternary structure, myosin I heavy chain is single-headed. Dimer of a heavy and a light chain. Inability to self-assemble into filaments.

In terms of biological role, actin-based motor protein, possibly involved in a wide range of motile processes, such as cell movement across a surface, and extension and retraction of pseudopodia or lamellipodia. This is Myosin IA heavy chain (myoA) from Dictyostelium discoideum (Social amoeba).